We begin with the raw amino-acid sequence, 1097 residues long: DNA-directed RNA polymerase subunit beta (1097 aa).

The disordered stretch occupies residues 1072 to 1097 (QDINPRRNTPSRPTYESLGTSEYEED). The span at 1077 to 1091 (RRNTPSRPTYESLGT) shows a compositional bias: polar residues.

This sequence belongs to the RNA polymerase beta chain family. In terms of assembly, in cyanobacteria the RNAP catalytic core is composed of 2 alpha, 1 beta, 1 beta', 1 gamma and 1 omega subunit. When a sigma factor is associated with the core the holoenzyme is formed, which can initiate transcription.

It carries out the reaction RNA(n) + a ribonucleoside 5'-triphosphate = RNA(n+1) + diphosphate. Its function is as follows. DNA-dependent RNA polymerase catalyzes the transcription of DNA into RNA using the four ribonucleoside triphosphates as substrates. The sequence is that of DNA-directed RNA polymerase subunit beta from Prochlorococcus marinus (strain MIT 9215).